The chain runs to 100 residues: Urease subunit gamma (100 aa).

This sequence belongs to the urease gamma subunit family. As to quaternary structure, heterotrimer of UreA (gamma), UreB (beta) and UreC (alpha) subunits. Three heterotrimers associate to form the active enzyme.

Its subcellular location is the cytoplasm. It catalyses the reaction urea + 2 H2O + H(+) = hydrogencarbonate + 2 NH4(+). Its pathway is nitrogen metabolism; urea degradation; CO(2) and NH(3) from urea (urease route): step 1/1. The sequence is that of Urease subunit gamma from Allorhizobium ampelinum (strain ATCC BAA-846 / DSM 112012 / S4) (Agrobacterium vitis (strain S4)).